The following is a 264-amino-acid chain: Thymidylate synthase (264 aa).

Arg-21 contacts dUMP. Position 51 (His-51) interacts with (6R)-5,10-methylene-5,6,7,8-tetrahydrofolate. Residue 126-127 participates in dUMP binding; sequence RR. Cys-146 (nucleophile) is an active-site residue. DUMP-binding positions include 166 to 169, Asn-177, and 207 to 209; these read RSCD and HLY. Asp-169 is a (6R)-5,10-methylene-5,6,7,8-tetrahydrofolate binding site. Ser-263 lines the (6R)-5,10-methylene-5,6,7,8-tetrahydrofolate pocket.

Belongs to the thymidylate synthase family. Bacterial-type ThyA subfamily. As to quaternary structure, homodimer.

The protein resides in the cytoplasm. The catalysed reaction is dUMP + (6R)-5,10-methylene-5,6,7,8-tetrahydrofolate = 7,8-dihydrofolate + dTMP. The protein operates within pyrimidine metabolism; dTTP biosynthesis. In terms of biological role, catalyzes the reductive methylation of 2'-deoxyuridine-5'-monophosphate (dUMP) to 2'-deoxythymidine-5'-monophosphate (dTMP) while utilizing 5,10-methylenetetrahydrofolate (mTHF) as the methyl donor and reductant in the reaction, yielding dihydrofolate (DHF) as a by-product. This enzymatic reaction provides an intracellular de novo source of dTMP, an essential precursor for DNA biosynthesis. The chain is Thymidylate synthase from Buchnera aphidicola subsp. Schizaphis graminum (strain Sg).